The chain runs to 56 residues: Small ribosomal subunit protein uS14 (56 aa).

Ser9 carries the post-translational modification Phosphoserine. Position 12 is an omega-N-methylarginine (Arg12). 4 residues coordinate Zn(2+): Cys21, Cys24, Cys39, and Cys42. N6-acetyllysine is present on Lys48.

This sequence belongs to the universal ribosomal protein uS14 family. Component of the 40S small ribosomal subunit. The cofactor is Zn(2+).

The protein resides in the cytoplasm. The protein localises to the cytosol. It is found in the rough endoplasmic reticulum. Functionally, component of the small ribosomal subunit. The ribosome is a large ribonucleoprotein complex responsible for the synthesis of proteins in the cell. In Mus musculus (Mouse), this protein is Small ribosomal subunit protein uS14 (Rps29).